Here is a 526-residue protein sequence, read N- to C-terminus: Exodeoxyribonuclease 7 large subunit (526 aa).

Positions 499–526 (AGEDGTPSQAPKKRPARAGEPTKQGSLF) are disordered.

The protein belongs to the XseA family. As to quaternary structure, heterooligomer composed of large and small subunits.

The protein resides in the cytoplasm. It catalyses the reaction Exonucleolytic cleavage in either 5'- to 3'- or 3'- to 5'-direction to yield nucleoside 5'-phosphates.. In terms of biological role, bidirectionally degrades single-stranded DNA into large acid-insoluble oligonucleotides, which are then degraded further into small acid-soluble oligonucleotides. The polypeptide is Exodeoxyribonuclease 7 large subunit (Sinorhizobium medicae (strain WSM419) (Ensifer medicae)).